The following is a 260-amino-acid chain: G patch domain-containing protein 11 (260 aa).

Residues M25 to M61 adopt a coiled-coil conformation. The segment at R33–D60 is disordered. The G-patch domain occupies C69–L115. K123 bears the N6-acetyllysine mark. The tract at residues W187–E212 is disordered. Acidic residues predominate over residues E192–K210.

The protein belongs to the GPATCH11 family.

The protein resides in the chromosome. Its subcellular location is the centromere. It is found in the kinetochore. The polypeptide is G patch domain-containing protein 11 (GPATCH11) (Bos taurus (Bovine)).